Reading from the N-terminus, the 159-residue chain is Putative pre-16S rRNA nuclease (159 aa).

This sequence belongs to the YqgF nuclease family.

It localises to the cytoplasm. Functionally, could be a nuclease involved in processing of the 5'-end of pre-16S rRNA. In Bartonella quintana (strain Toulouse) (Rochalimaea quintana), this protein is Putative pre-16S rRNA nuclease.